Consider the following 342-residue polypeptide: Biotin synthase (342 aa).

The Radical SAM core domain occupies 38–262; sequence GQVQISTLLS…MMPTSYVRLS (225 aa). Positions 53, 57, and 60 each coordinate [4Fe-4S] cluster. 4 residues coordinate [2Fe-2S] cluster: Cys-97, Cys-128, Cys-188, and Arg-260.

Belongs to the radical SAM superfamily. Biotin synthase family. In terms of assembly, homodimer. [4Fe-4S] cluster serves as cofactor. It depends on [2Fe-2S] cluster as a cofactor.

It carries out the reaction (4R,5S)-dethiobiotin + (sulfur carrier)-SH + 2 reduced [2Fe-2S]-[ferredoxin] + 2 S-adenosyl-L-methionine = (sulfur carrier)-H + biotin + 2 5'-deoxyadenosine + 2 L-methionine + 2 oxidized [2Fe-2S]-[ferredoxin]. The protein operates within cofactor biosynthesis; biotin biosynthesis; biotin from 7,8-diaminononanoate: step 2/2. Its function is as follows. Catalyzes the conversion of dethiobiotin (DTB) to biotin by the insertion of a sulfur atom into dethiobiotin via a radical-based mechanism. The polypeptide is Biotin synthase (Baumannia cicadellinicola subsp. Homalodisca coagulata).